The chain runs to 144 residues: Granulocyte-macrophage colony-stimulating factor (144 aa).

The N-terminal stretch at 1 to 17 is a signal peptide; sequence MWLQNLLLLGTVVCSFS. Residue S24 is glycosylated (O-linked (GalNAc...) serine). T27 carries O-linked (GalNAc...) threonine glycosylation. 2 N-linked (GlcNAc...) asparagine glycosylation sites follow: N44 and N54. Intrachain disulfides connect C71–C113 and C105–C138.

Belongs to the GM-CSF family. As to quaternary structure, monomer. The signaling GM-CSF receptor complex is a dodecamer of two head-to-head hexamers of two alpha, two beta, and two ligand subunits.

It is found in the secreted. Its function is as follows. Cytokine that stimulates the growth and differentiation of hematopoietic precursor cells from various lineages, including granulocytes, macrophages, eosinophils and erythrocytes. In Cervus elaphus (Red deer), this protein is Granulocyte-macrophage colony-stimulating factor (CSF2).